Consider the following 318-residue polypeptide: Olfactory receptor 52D1 (318 aa).

Over Met-1–Phe-28 the chain is Extracellular. Asn-5 carries an N-linked (GlcNAc...) asparagine glycan. Residues Trp-29–Ile-49 traverse the membrane as a helical segment. Over Leu-50 to Ala-57 the chain is Cytoplasmic. A helical transmembrane segment spans residues Leu-58–Ser-78. At Thr-79–Ala-102 the chain is on the extracellular side. Cys-100 and Cys-192 form a disulfide bridge. A helical membrane pass occupies residues Gln-103–Phe-123. At Asp-124–Ala-142 the chain is on the cytoplasmic side. The chain crosses the membrane as a helical span at residues Val-143–Ile-163. At Phe-164–Ile-199 the chain is on the extracellular side. The chain crosses the membrane as a helical span at residues Val-200–Ser-220. Residues Tyr-221 to Ala-240 lie on the Cytoplasmic side of the membrane. The chain crosses the membrane as a helical span at residues Leu-241–Ser-261. Topologically, residues Phe-262 to His-277 are extracellular. Residues Ile-278–Ala-298 traverse the membrane as a helical segment. Over Arg-299–Ile-318 the chain is Cytoplasmic.

Belongs to the G-protein coupled receptor 1 family.

The protein resides in the cell membrane. Its function is as follows. Odorant receptor. The sequence is that of Olfactory receptor 52D1 (OR52D1) from Homo sapiens (Human).